An 89-amino-acid polypeptide reads, in one-letter code: Putative membrane protein insertion efficiency factor (89 aa).

A disordered region spans residues 68–89; sequence VPPPNSDARNAPHEAEASSHRL. Positions 77-89 are enriched in basic and acidic residues; the sequence is NAPHEAEASSHRL.

This sequence belongs to the UPF0161 family.

It is found in the cell inner membrane. Functionally, could be involved in insertion of integral membrane proteins into the membrane. The sequence is that of Putative membrane protein insertion efficiency factor from Burkholderia thailandensis (strain ATCC 700388 / DSM 13276 / CCUG 48851 / CIP 106301 / E264).